We begin with the raw amino-acid sequence, 140 residues long: Histone H3-like centromeric protein A (140 aa).

The tract at residues 1–46 (MGPRRRSRKPEAPRRRSPSPTPTPGPSRRGPSLGASSHQHSRRRQG) is disordered. Glycine 2 carries the post-translational modification N,N,N-trimethylglycine. Serine 7 is subject to Phosphoserine; by AURKA and AURKB. 3 positions are modified to phosphoserine: serine 17, serine 19, and serine 27. Positions 26 to 37 (PSRRGPSLGASS) are enriched in low complexity. An important for flexibility of DNA ends that protrude from nucleosomes region spans residues 39-54 (QHSRRRQGWLKEIRKL). Serine 68 bears the Phosphoserine mark. A CATD region spans residues 75–116 (CVKFTRGVDFNWQAQALLALQEAAEAFLVHLFEDAYLLTLHA).

This sequence belongs to the histone H3 family. As to quaternary structure, component of centromeric nucleosomes, where DNA is wrapped around a histone octamer core. The octamer contains two molecules each of H2A, H2B, CENPA and H4 assembled in one CENPA-H4 heterotetramer and two H2A-H2B heterodimers. CENPA modulates the DNA-binding characteristics of nucleosomes so that protruding DNA ends have higher flexibility than in nucleosomes containing conventional histone H3. Inhibits binding of histone H1 to nucleosomes, since histone H1 binds preferentially to rigid DNA linkers that protrude from nucleosomes. Nucleosomes containing CENPA also contain histone H2A variants such as MACROH2A and H2A.Z/H2AZ1. The CENPA-H4 heterotetramer is more compact and structurally more rigid than corresponding H3-H4 heterotetramers. Can assemble into nucleosomes that contain both CENPA and histone H3.3; these nucleosomes interact with a single CENPC chain. Heterotrimer composed of HJURP, CENPA and histone H4, where HJURP interacts with the dimer formed by CENPA and histone H4 and prevents tetramerization of CENPA and H4. Component of the CENPA-NAC complex, at least composed of CENPA, CENPC, CENPH, CENPM, CENPN, CENPT and CENPU. Interacts (via CATD domain) with HJURP; the interaction is direct and is required for its localization to centromeres. Interacts with CENPC, CENPN and CENPT; interaction is direct. Part of a centromere complex consisting of CENPA, CENPT and CENPW. Identified in centromere complexes containing histones H2A, H2B and H4, and at least CENPA, CENPB, CENPC, CENPT, CENPN, HJURP, SUPT16H, SSRP1 and RSF1. Can self-associate. The CENPA-H4 heterotetramer can bind DNA by itself (in vitro). Interacts with CDK1, PPP1CA and RBBP7. In terms of assembly, (Microbial infection) Interacts directly with herpes virus HHV-1 protein ICP0. Post-translationally, ubiquitinated. Interaction with herpes virus HSV-1 ICP0 protein, leads to its degradation by the proteasome pathway. In terms of processing, trimethylated by NTMT1 at the N-terminal glycine after cleavage of Met-1. Methylation is low before incorporation into nucleosomes and increases with cell cycle progression, with the highest levels in mitotic nucleosomes. Phosphorylated by CDK1 at Ser-68 during early mitosis; this abolishes association with chromatin and centromeres, prevents interaction with HJURP and thereby prevents premature assembly of CENPA into centromeres. Dephosphorylated at Ser-68 by PPP1CA during late mitosis. Phosphorylation of Ser-7 by AURKA and AURKB during prophase is required for localization of AURKA and AURKB at inner centromere and is essential for normal cytokinesis. Initial phosphorylation during prophase is mediated by AURKA and is maintained by AURKB. Post-translationally, poly-ADP-ribosylated by PARP1.

It localises to the nucleus. It is found in the chromosome. The protein resides in the centromere. Its function is as follows. Histone H3-like nucleosomal protein that is specifically found in centromeric nucleosomes. Replaces conventional H3 in the nucleosome core of centromeric chromatin that serves as an assembly site for the inner kinetochore. The presence of CENPA subtly modifies the nucleosome structure and the way DNA is wrapped around the nucleosome and gives rise to protruding DNA ends that are less well-ordered and rigid compared to nucleosomes containing histone H3. May serve as an epigenetic mark that propagates centromere identity through replication and cell division. Required for recruitment and assembly of kinetochore proteins, and as a consequence required for progress through mitosis, chromosome segregation and cytokinesis. The sequence is that of Histone H3-like centromeric protein A (CENPA) from Homo sapiens (Human).